The chain runs to 337 residues: 15-cis-phytoene synthase (337 aa).

Belongs to the phytoene/squalene synthase family. It depends on ATP as a cofactor. Mn(2+) serves as cofactor. The cofactor is Mg(2+).

The catalysed reaction is 2 (2E,6E,10E)-geranylgeranyl diphosphate = 15-cis-phytoene + 2 diphosphate. The protein operates within carotenoid biosynthesis; phytoene biosynthesis. Its function is as follows. Involved in the biosynthesis of carotenoids. Catalyzes the condensation of two molecules of geranylgeranyl diphosphate (GGPP) to give prephytoene diphosphate (PPPP) and the subsequent rearrangement of the cyclopropylcarbinyl intermediate to yield 15-cis-phytoene. The sequence is that of 15-cis-phytoene synthase (crtB) from Synechocystis sp. (strain ATCC 27184 / PCC 6803 / Kazusa).